A 123-amino-acid polypeptide reads, in one-letter code: Large ribosomal subunit protein bL12 (123 aa).

This sequence belongs to the bacterial ribosomal protein bL12 family. Homodimer. Part of the ribosomal stalk of the 50S ribosomal subunit. Forms a multimeric L10(L12)X complex, where L10 forms an elongated spine to which 2 to 4 L12 dimers bind in a sequential fashion. Binds GTP-bound translation factors.

Functionally, forms part of the ribosomal stalk which helps the ribosome interact with GTP-bound translation factors. Is thus essential for accurate translation. This chain is Large ribosomal subunit protein bL12, found in Acholeplasma laidlawii (strain PG-8A).